Here is a 308-residue protein sequence, read N- to C-terminus: Palmitoyltransferase ZDHHC7 (308 aa).

Topologically, residues 1–50 (MQPSGHRLRDIEHHPLLTDNDNYDSASSSSSEADMADRVWFIRDGCGMVC) are cytoplasmic. The helical transmembrane segment at 51 to 71 (AVMTWLLVVYADFVVTFVMLL) threads the bilayer. Residues 72–75 (PSKD) lie on the Lumenal side of the membrane. Residues 76 to 96 (FWYSVVNGVLFNCLAVLALSS) form a helical membrane-spanning segment. The Cytoplasmic portion of the chain corresponds to 97 to 173 (HLRTMLTDPG…NNCVGEKNQR (77 aa)). The 51-residue stretch at 130-180 (YKCPKCCCIKPERAHHCSICKRCIRKMDHHCPWVNNCVGEKNQRFFVLFTM) folds into the DHHC domain. The S-palmitoyl cysteine intermediate role is filled by C160. Residues 174-194 (FFVLFTMYIALSSIHALILCG) form a helical membrane-spanning segment. Residues 195-217 (LQFISCVRGQWTECSDFSPPITV) are Lumenal-facing. Residues 218-238 (ILLVFLCLEGLLFFTFTAVMF) form a helical membrane-spanning segment. Residues 239–308 (GTQIHSICND…TRKGGPEFSV (70 aa)) are Cytoplasmic-facing.

Belongs to the DHHC palmitoyltransferase family. Homooligomers. Heterooligomers with ZDHHC3. In terms of processing, autopalmitoylated. Widely expressed. Present in Sertoli cells (at protein level).

The protein localises to the golgi apparatus membrane. It carries out the reaction L-cysteinyl-[protein] + hexadecanoyl-CoA = S-hexadecanoyl-L-cysteinyl-[protein] + CoA. The catalysed reaction is L-cysteinyl-[protein] + tetradecanoyl-CoA = S-tetradecanoyl-L-cysteinyl-[protein] + CoA. The enzyme catalyses L-cysteinyl-[protein] + octadecanoyl-CoA = S-octadecanoyl-L-cysteinyl-[protein] + CoA. Functionally, golgi-localized palmitoyltransferase that catalyzes the addition of palmitate onto various protein substrates and therefore functions in several unrelated biological processes. Has no stringent fatty acid selectivity and in addition to palmitate can also transfer onto target proteins myristate from tetradecanoyl-CoA and stearate from octadecanoyl-CoA. Palmitoylates sex steroid hormone receptors, including ESR1, PGR and AR, thereby regulating their targeting to the plasma membrane and their function in rapid intracellular signaling upon binding of sex hormones. Palmitoylates GNAQ, a heterotrimeric G protein, regulating its dynamic localization at the plasma membrane and is thereby involved in GNAQ-dependent G protein-coupled receptor signaling pathways. Also functions in ligand-induced cell death by regulating the FAS signaling pathway through the palmitoylation and stabilization of the receptor at the plasma membrane. In epithelial cells, palmitoylates SCRIB and regulates its localization to the plasma membrane, regulating indirectly cell polarity and differentiation. Also palmitoylates JAM3 and promotes its expression at tight junctions and regulates its function in cell migration. Palmitoylates the glucose transporter GLUT4/SLC2A4 and controls the insulin-dependent translocation of GLUT4 to the plasma membrane. In brain, could also palmitoylate SNAP25 and DLG4/PSD95. Could also palmitoylate DNAJC5 and regulate its localization to the Golgi membrane. Could also palmitoylate NCDN. May play a role in follicle stimulation hormone (FSH) activation of testicular Sertoli cells. Activates pyroptosis by catalyzing palmitoylation of gasdermin-D (GSDMD). This is Palmitoyltransferase ZDHHC7 from Rattus norvegicus (Rat).